Here is a 305-residue protein sequence, read N- to C-terminus: 2-oxoacid:ferredoxin oxidoreductase subunit beta (305 aa).

Positions 12, 15, and 46 each coordinate [4Fe-4S] cluster. Residues 44 to 47 (IGCS) and histidine 65 contribute to the thiamine diphosphate site. Aspartate 90 provides a ligand contact to Mg(2+). A thiamine diphosphate-binding site is contributed by 91 to 92 (GD). Residues asparagine 118 and valine 120 each coordinate Mg(2+). Residue 122–123 (GL) participates in thiamine diphosphate binding. Cysteine 197 contacts [4Fe-4S] cluster.

Heterodimer composed of an alpha and a beta subunit. It depends on [4Fe-4S] cluster as a cofactor. The cofactor is thiamine diphosphate. Requires Mg(2+) as cofactor.

It is found in the cytoplasm. It catalyses the reaction a 2-oxocarboxylate + 2 oxidized [2Fe-2S]-[ferredoxin] + CoA = an acyl-CoA + 2 reduced [2Fe-2S]-[ferredoxin] + CO2 + H(+). Its function is as follows. Catalyzes the coenzyme A-dependent oxidative decarboxylation of different 2-oxoacids such as 2-oxoglutarate, pyruvate and 2-oxobutyrate to form their CoA derivatives. The polypeptide is 2-oxoacid:ferredoxin oxidoreductase subunit beta (Sulfolobus sp).